Reading from the N-terminus, the 295-residue chain is Putative S-adenosyl-L-methionine-dependent methyltransferase Mvan_0910 (295 aa).

S-adenosyl-L-methionine contacts are provided by residues Asp-126 and 155–156 (DL).

This sequence belongs to the UPF0677 family.

Functionally, exhibits S-adenosyl-L-methionine-dependent methyltransferase activity. The sequence is that of Putative S-adenosyl-L-methionine-dependent methyltransferase Mvan_0910 from Mycolicibacterium vanbaalenii (strain DSM 7251 / JCM 13017 / BCRC 16820 / KCTC 9966 / NRRL B-24157 / PYR-1) (Mycobacterium vanbaalenii).